The following is a 106-amino-acid chain: Trp operon repressor homolog (106 aa).

The DNA-binding element occupies 59–82 (QREIQQILNTSAATITRGSNMIKI).

Belongs to the TrpR family. In terms of assembly, homodimer.

The protein resides in the cytoplasm. Functionally, this protein is an aporepressor. When complexed with L-tryptophan it binds the operator region of the trp operon and prevents the initiation of transcription. The protein is Trp operon repressor homolog of Histophilus somni (strain 2336) (Haemophilus somnus).